Reading from the N-terminus, the 148-residue chain is MRLHLITVGEPKLAYARAGWDEYEKRLRRYHKVQVTRVGGRTGAQASEAIARAAGRAPLILLDPRGEQFTSESLSAYLDAQALDGRGELAFAVGGPEGHTDDLRARAHRLWSLSLLTLPHDLAMILLLEALYRAATISAGEPYHRGST.

S-adenosyl-L-methionine-binding positions include Leu62, Gly94, and 113-118 (LSLLTL).

The protein belongs to the RNA methyltransferase RlmH family. In terms of assembly, homodimer.

It localises to the cytoplasm. It catalyses the reaction pseudouridine(1915) in 23S rRNA + S-adenosyl-L-methionine = N(3)-methylpseudouridine(1915) in 23S rRNA + S-adenosyl-L-homocysteine + H(+). Its function is as follows. Specifically methylates the pseudouridine at position 1915 (m3Psi1915) in 23S rRNA. This Deinococcus geothermalis (strain DSM 11300 / CIP 105573 / AG-3a) protein is Ribosomal RNA large subunit methyltransferase H.